A 635-amino-acid chain; its full sequence is Bifunctional lysine-specific demethylase and histidyl-hydroxylase NO66 (635 aa).

Disordered regions lie at residues 1–115 (MSAV…LQNS) and 141–190 (FNGE…KANG). The span at 84–99 (ASASDINTSASKNVNA) shows a compositional bias: low complexity. Over residues 141–156 (FNGESLKNNSNHSTPV) the composition is skewed to polar residues. One can recognise a JmjC domain in the interval 295–440 (CSIRMLNPQT…DLLELFFPHA (146 aa)). 3 residues coordinate Fe cation: His-341, Asp-343, and His-406.

This sequence belongs to the ROX family. NO66 subfamily. Fe(2+) serves as cofactor.

The protein localises to the nucleus. It carries out the reaction N(6),N(6)-dimethyl-L-lysyl(36)-[histone H3] + 2 2-oxoglutarate + 2 O2 = L-lysyl(36)-[histone H3] + 2 formaldehyde + 2 succinate + 2 CO2. In terms of biological role, oxygenase that can act as both a histone lysine demethylase and a ribosomal histidine hydroxylase. Specifically demethylates 'Lys-4' (H3K4me) and 'Lys-36' (H3K36me) of histone H3, thereby playing a central role in histone code. The polypeptide is Bifunctional lysine-specific demethylase and histidyl-hydroxylase NO66 (Aedes aegypti (Yellowfever mosquito)).